We begin with the raw amino-acid sequence, 207 residues long: Holliday junction resolvase RecU (207 aa).

The disordered stretch occupies residues M1 to S21. Positions 87, 89, 102, and 121 each coordinate Mg(2+).

This sequence belongs to the RecU family. Mg(2+) is required as a cofactor.

It localises to the cytoplasm. It catalyses the reaction Endonucleolytic cleavage at a junction such as a reciprocal single-stranded crossover between two homologous DNA duplexes (Holliday junction).. Endonuclease that resolves Holliday junction intermediates in genetic recombination. Cleaves mobile four-strand junctions by introducing symmetrical nicks in paired strands. Promotes annealing of linear ssDNA with homologous dsDNA. Required for DNA repair, homologous recombination and chromosome segregation. The protein is Holliday junction resolvase RecU of Lactiplantibacillus plantarum (strain ATCC BAA-793 / NCIMB 8826 / WCFS1) (Lactobacillus plantarum).